The chain runs to 130 residues: Small ribosomal subunit protein uS9 (130 aa).

The interval 104–130 (LTRDPRMKERRKYGLKKARKAPQFSKR) is disordered. Residues 111–130 (KERRKYGLKKARKAPQFSKR) are compositionally biased toward basic residues.

This sequence belongs to the universal ribosomal protein uS9 family.

In Moorella thermoacetica (strain ATCC 39073 / JCM 9320), this protein is Small ribosomal subunit protein uS9.